A 995-amino-acid polypeptide reads, in one-letter code: Aconitate hydratase 2, mitochondrial (995 aa).

The transit peptide at 1–83 (MYRRATSGVR…PASLRAQARN (83 aa)) directs the protein to the mitochondrion. Substrate is bound by residues Gln-187 and 306 to 308 (DSH). Cys-538, Cys-604, and Cys-607 together coordinate [4Fe-4S] cluster. Residues Arg-637, Arg-642, Arg-800, and 881-882 (SR) contribute to the substrate site.

It belongs to the aconitase/IPM isomerase family. In terms of assembly, monomer. [4Fe-4S] cluster serves as cofactor. Mostly expressed in roots, leaves and flowers, also present in stems, and, at low levels, in seeds.

The protein resides in the mitochondrion. The enzyme catalyses citrate = D-threo-isocitrate. It participates in carbohydrate metabolism; tricarboxylic acid cycle; isocitrate from oxaloacetate: step 2/2. Catalyzes the isomerization of citrate to isocitrate via cis-aconitate. Contributes to oxidative stress tolerance. Involved in acetate assimilation. The sequence is that of Aconitate hydratase 2, mitochondrial from Arabidopsis thaliana (Mouse-ear cress).